The chain runs to 112 residues: uncharacterized protein (112 aa).

This sequence to Buchnera BU585.

This is an uncharacterized protein from Buchnera aphidicola subsp. Schizaphis graminum (strain Sg).